The sequence spans 486 residues: dTDP-4-dehydro-6-deoxy-alpha-D-glucopyranose 2,3-dehydratase (486 aa).

Residues tryptophan 66, 149 to 153, serine 187, tryptophan 304, arginine 367, 383 to 385, 388 to 389, and 421 to 424 each bind dTDP-4-dehydro-6-deoxy-alpha-D-glucose; these read TRSNY, QCS, NY, and EGGR.

The protein belongs to the hexose 2,3-dehydratase family. In terms of assembly, homodimer.

The catalysed reaction is dTDP-4-dehydro-6-deoxy-alpha-D-glucose = dTDP-3,4-didehydro-2,6-dideoxy-alpha-D-glucose + H2O. In terms of biological role, involved in the biosynthesis of forosamine ((4-dimethylamino)-2,3,4,6-tetradeoxy-alpha-D-threo-hexopyranose), a highly deoxygenated sugar component of several bioactive natural products such as the insecticidal spinosyns A and D. Catalyzes the removal of the hydroxyl group at position C-2 of the hexose ring of dTDP-4-dehydro-6-deoxy-alpha-D-glucopyranose, and the oxidation of the hydroxyl group at position C-3 to form a carbonyl functionality. The product of the reaction, dTDP-2,6-dideoxy-D-glycero-hex-2-enos-4-ulose, is a highly unstable diketosugar, which spontaneously forms dTDP-3,4-didehydro-2,6-dideoxy-alpha-D-glucose. The chain is dTDP-4-dehydro-6-deoxy-alpha-D-glucopyranose 2,3-dehydratase from Saccharopolyspora spinosa.